Consider the following 391-residue polypeptide: Coiled-coil domain-containing protein 85C-A (391 aa).

Coiled-coil stretches lie at residues 23 to 87 (KCSK…ELCC) and 121 to 146 (FQQK…KEII). Positions 154–212 (NGAGSRSSIDSQSSLSNLNGGSATVRDVGDGSSTSSTGSAGSPDHHHSHIHKPTEGKIT) are disordered. Composition is skewed to low complexity over residues 158–175 (SRSS…NGGS) and 183–195 (DGSS…SAGS).

This sequence belongs to the CCDC85 family.

Its subcellular location is the cell junction. The protein resides in the tight junction. It localises to the adherens junction. May play a role in cell-cell adhesion and epithelium development through its interaction with proteins of the beta-catenin family. May play an important role in cortical development, especially in the maintenance of radial glia. The chain is Coiled-coil domain-containing protein 85C-A (ccdc85ca) from Danio rerio (Zebrafish).